The sequence spans 56 residues: Small ribosomal subunit protein uS14 (56 aa).

Residue Ser9 is modified to Phosphoserine. Arg12 is modified (omega-N-methylarginine). Zn(2+)-binding residues include Cys21, Cys24, Cys39, and Cys42. Lys48 is subject to N6-acetyllysine.

The protein belongs to the universal ribosomal protein uS14 family. Component of the 40S small ribosomal subunit. Requires Zn(2+) as cofactor.

Its subcellular location is the cytoplasm. It is found in the cytosol. The protein resides in the rough endoplasmic reticulum. Its function is as follows. Component of the small ribosomal subunit. The ribosome is a large ribonucleoprotein complex responsible for the synthesis of proteins in the cell. This chain is Small ribosomal subunit protein uS14 (Rps29), found in Mus musculus (Mouse).